A 69-amino-acid chain; its full sequence is uncharacterized protein (69 aa).

4Fe-4S ferredoxin-type domains are found at residues 2–30 and 38–67; these read KIEINENFCKGCDICIVVCPRGVFEKSKK and PPIPVNPEKCTKCNLCILQCPDQAISIELS. [4Fe-4S] cluster contacts are provided by Cys-10, Cys-13, Cys-16, Cys-20, Cys-47, Cys-50, Cys-53, and Cys-57.

It depends on [4Fe-4S] cluster as a cofactor.

This is an uncharacterized protein from Methanocaldococcus jannaschii (strain ATCC 43067 / DSM 2661 / JAL-1 / JCM 10045 / NBRC 100440) (Methanococcus jannaschii).